We begin with the raw amino-acid sequence, 110 residues long: U1-lycotoxin-Ls1cc (110 aa).

Positions M1 to A20 are cleaved as a signal peptide. Residues E21–R44 constitute a propeptide that is removed on maturation. 4 disulfide bridges follow: C47–C62, C54–C71, C61–C89, and C73–C87.

The protein belongs to the neurotoxin 19 (CSTX) family. 03 subfamily. As to expression, expressed by the venom gland.

The protein resides in the secreted. The sequence is that of U1-lycotoxin-Ls1cc from Lycosa singoriensis (Wolf spider).